The sequence spans 194 residues: Isopentenyl-diphosphate Delta-isomerase (194 aa).

Positions 35 and 42 each coordinate Mn(2+). In terms of domain architecture, Nudix hydrolase spans 40 to 174; the sequence is PLHLAFSSYL…PWALSPWSVD (135 aa). Residue C77 is part of the active site. H79 contributes to the Mn(2+) binding site. E97 contributes to the Mg(2+) binding site. 2 residues coordinate Mn(2+): E124 and E126. Residue E126 is part of the active site.

Belongs to the IPP isomerase type 1 family. Requires Mg(2+) as cofactor. Mn(2+) serves as cofactor.

It is found in the cytoplasm. It carries out the reaction isopentenyl diphosphate = dimethylallyl diphosphate. It participates in isoprenoid biosynthesis; dimethylallyl diphosphate biosynthesis; dimethylallyl diphosphate from isopentenyl diphosphate: step 1/1. Its function is as follows. Catalyzes the 1,3-allylic rearrangement of the homoallylic substrate isopentenyl (IPP) to its highly electrophilic allylic isomer, dimethylallyl diphosphate (DMAPP). This Frankia alni (strain DSM 45986 / CECT 9034 / ACN14a) protein is Isopentenyl-diphosphate Delta-isomerase.